Consider the following 214-residue polypeptide: Octanoyltransferase (214 aa).

Residues 35 to 211 enclose the BPL/LPL catalytic domain; the sequence is KSNMNFIWLG…IIHEEFNFNF (177 aa). Residues 75 to 82, 142 to 144, and 155 to 157 contribute to the substrate site; these read RGGEVTCH, SIG, and GFS. The active-site Acyl-thioester intermediate is C173.

It belongs to the LipB family.

It is found in the cytoplasm. The enzyme catalyses octanoyl-[ACP] + L-lysyl-[protein] = N(6)-octanoyl-L-lysyl-[protein] + holo-[ACP] + H(+). Its pathway is protein modification; protein lipoylation via endogenous pathway; protein N(6)-(lipoyl)lysine from octanoyl-[acyl-carrier-protein]: step 1/2. Functionally, catalyzes the transfer of endogenously produced octanoic acid from octanoyl-acyl-carrier-protein onto the lipoyl domains of lipoate-dependent enzymes. Lipoyl-ACP can also act as a substrate although octanoyl-ACP is likely to be the physiological substrate. This chain is Octanoyltransferase, found in Prochlorococcus marinus subsp. pastoris (strain CCMP1986 / NIES-2087 / MED4).